The sequence spans 375 residues: Queuine tRNA-ribosyltransferase (375 aa).

D90 functions as the Proton acceptor in the catalytic mechanism. Residues 90 to 94, D144, Q190, and G217 each bind substrate; that span reads DSGGF. The segment at 248-254 is RNA binding; sequence GIGTPHY. Residue D267 is the Nucleophile of the active site. Positions 272-276 are RNA binding; important for wobble base 34 recognition; the sequence is TRIAR. Zn(2+)-binding residues include C305, C307, C310, and H336.

Belongs to the queuine tRNA-ribosyltransferase family. As to quaternary structure, homodimer. Within each dimer, one monomer is responsible for RNA recognition and catalysis, while the other monomer binds to the replacement base PreQ1. Zn(2+) serves as cofactor.

The catalysed reaction is 7-aminomethyl-7-carbaguanine + guanosine(34) in tRNA = 7-aminomethyl-7-carbaguanosine(34) in tRNA + guanine. Its pathway is tRNA modification; tRNA-queuosine biosynthesis. Functionally, catalyzes the base-exchange of a guanine (G) residue with the queuine precursor 7-aminomethyl-7-deazaguanine (PreQ1) at position 34 (anticodon wobble position) in tRNAs with GU(N) anticodons (tRNA-Asp, -Asn, -His and -Tyr). Catalysis occurs through a double-displacement mechanism. The nucleophile active site attacks the C1' of nucleotide 34 to detach the guanine base from the RNA, forming a covalent enzyme-RNA intermediate. The proton acceptor active site deprotonates the incoming PreQ1, allowing a nucleophilic attack on the C1' of the ribose to form the product. After dissociation, two additional enzymatic reactions on the tRNA convert PreQ1 to queuine (Q), resulting in the hypermodified nucleoside queuosine (7-(((4,5-cis-dihydroxy-2-cyclopenten-1-yl)amino)methyl)-7-deazaguanosine). This Borrelia recurrentis (strain A1) protein is Queuine tRNA-ribosyltransferase.